Here is a 525-residue protein sequence, read N- to C-terminus: Vesicular inhibitory amino acid transporter (525 aa).

The Cytoplasmic portion of the chain corresponds to 1-132; that stretch reads MATLLRSKLT…WNVTNAIQGM (132 aa). Residues 133 to 153 form a helical membrane-spanning segment; the sequence is FVLGLPYAILHGGYLGLFLII. The Lumenal, vesicle portion of the chain corresponds to 154-204; sequence FAAVVCCYTGKILIACLYEENEDGEVVRVRDSYVAIANACCAPRFPTLGGR. Residue Y186 is modified to 3'-nitrotyrosine. A helical membrane pass occupies residues 205 to 225; it reads VVNVAQIIELVMTCILYVVVS. Residues 226-265 are Cytoplasmic-facing; that stretch reads GNLMYNSFPGLPVSQKSWSIIATAVLLPCAFLKNLKAVSK. A helical membrane pass occupies residues 266–286; it reads FSLLCTLAHFVINILVIAYCL. At 287–305 the chain is on the lumenal, vesicle side; sequence SRARDWAWEKVKFYIDVKK. The chain crosses the membrane as a helical span at residues 306 to 326; sequence FPISIGIIVFSYTSQIFLPSL. The Cytoplasmic segment spans residues 327–341; it reads EGNMQQPSEFHCMMN. A helical transmembrane segment spans residues 342–362; that stretch reads WTHIAACVLKGLFALVAYLTW. Residues 363 to 383 lie on the Lumenal, vesicle side of the membrane; it reads ADETKEVITDNLPGSIRAVVN. The helical transmembrane segment at 384-404 threads the bilayer; the sequence is LFLVAKALLSYPLPFFAAVEV. Topologically, residues 405–438 are cytoplasmic; it reads LEKSLFQEGSRAFFPACYGGDGRLKSWGLTLRCA. A helical membrane pass occupies residues 439–459; it reads LVVFTLLMAIYVPHFALLMGL. At 460-461 the chain is on the lumenal, vesicle side; sequence TG. Residues 462 to 482 form a helical membrane-spanning segment; the sequence is SLTGAGLCFLLPSLFHLRLLW. Over 483–489 the chain is Cytoplasmic; the sequence is RKLLWHQ. The helical transmembrane segment at 490–510 threads the bilayer; sequence VFFDVAIFVIGGICSVSGFVH. Topologically, residues 511 to 525 are lumenal, vesicle; sequence SLEGLIEAYRTNAED.

This sequence belongs to the amino acid/polyamine transporter 2 family. As to expression, brain and retina. Localized in horizontal cell tips at both rod and cone terminals.

Its subcellular location is the cytoplasmic vesicle membrane. It is found in the presynapse. The enzyme catalyses 4-aminobutanoate(out) + n H(+)(in) = 4-aminobutanoate(in) + n H(+)(out). It catalyses the reaction glycine(out) + n H(+)(in) = glycine(in) + n H(+)(out). The catalysed reaction is beta-alanine(out) + n H(+)(in) = beta-alanine(in) + n H(+)(out). With respect to regulation, chloride ions activate 4-aminobutanoate/H(+) transport. In terms of biological role, antiporter that exchanges vesicular protons for cytosolic 4-aminobutanoate or to a lesser extend glycine, thus allowing their secretion from nerve terminals. The transport is equally dependent on the chemical and electrical components of the proton gradient. May also transport beta-alanine. Acidification of GABAergic synaptic vesicles is a prerequisite for 4-aminobutanoate uptake. This Mus musculus (Mouse) protein is Vesicular inhibitory amino acid transporter.